An 89-amino-acid chain; its full sequence is HssA/B-like protein 16 (89 aa).

The protein belongs to the hssA/B family.

This is HssA/B-like protein 16 (hssl16) from Dictyostelium discoideum (Social amoeba).